A 355-amino-acid polypeptide reads, in one-letter code: Proto-oncogene Wnt-3 (355 aa).

Positions 1–21 (MEPHLLGLLLGLLLSGTRVLA) are cleaved as a signal peptide. Disulfide bonds link Cys80/Cys91, Cys131/Cys139, Cys141/Cys158, Cys206/Cys220, Cys208/Cys215, Cys284/Cys315, Cys300/Cys310, Cys314/Cys354, Cys330/Cys345, Cys332/Cys342, and Cys337/Cys338. N-linked (GlcNAc...) asparagine glycosylation occurs at Asn90. Ser212 carries O-palmitoleoyl serine; by PORCN lipidation. An N-linked (GlcNAc...) asparagine glycan is attached at Asn301.

Belongs to the Wnt family. In terms of assembly, forms a soluble 1:1 complex with AFM; this prevents oligomerization and is required for prolonged biological activity. The complex with AFM may represent the physiological form in body fluids. Interacts with PORCN. Interacts with WLS. In terms of processing, palmitoleoylation is required for efficient binding to frizzled receptors. Depalmitoleoylation leads to Wnt signaling pathway inhibition. As to expression, detected at low levels in adult brain. Dorsal portion of the neural tube, dorsal ectoderm, the branchial arches, and the limb buds.

It localises to the secreted. It is found in the extracellular space. The protein localises to the extracellular matrix. Ligand for members of the frizzled family of seven transmembrane receptors. Functions in the canonical Wnt signaling pathway that results in activation of transcription factors of the TCF/LEF family. Required for normal gastrulation, formation of the primitive streak, and for the formation of the mesoderm during early embryogenesis. Required for normal formation of the apical ectodermal ridge and for normal embryonic limb development. The sequence is that of Proto-oncogene Wnt-3 (Wnt3) from Mus musculus (Mouse).